Reading from the N-terminus, the 287-residue chain is Inorganic pyrophosphatase (287 aa).

Diphosphate is bound at residue arginine 79. Mg(2+) contacts are provided by aspartate 116, aspartate 121, and aspartate 153.

The protein belongs to the PPase family. It depends on Mg(2+) as a cofactor.

It is found in the cytoplasm. It catalyses the reaction diphosphate + H2O = 2 phosphate + H(+). This is Inorganic pyrophosphatase (IPP1) from Zygosaccharomyces bailii.